The chain runs to 194 residues: Imidazoleglycerol-phosphate dehydratase (194 aa).

This sequence belongs to the imidazoleglycerol-phosphate dehydratase family.

The protein resides in the cytoplasm. It carries out the reaction D-erythro-1-(imidazol-4-yl)glycerol 3-phosphate = 3-(imidazol-4-yl)-2-oxopropyl phosphate + H2O. It functions in the pathway amino-acid biosynthesis; L-histidine biosynthesis; L-histidine from 5-phospho-alpha-D-ribose 1-diphosphate: step 6/9. This is Imidazoleglycerol-phosphate dehydratase from Bacillus pumilus (strain SAFR-032).